A 340-amino-acid polypeptide reads, in one-letter code: Ketol-acid reductoisomerase (NADP(+)) (340 aa).

The 183-residue stretch at 1–183 folds into the KARI N-terminal Rossmann domain; the sequence is MAVTVYYDKD…GAGRTGIIET (183 aa). Residues 26 to 29, Lys-49, Ser-54, and 84 to 87 each bind NADP(+); these read FGSQ and DELQ. The active site involves His-109. Gly-135 contacts NADP(+). The KARI C-terminal knotted domain maps to 184–329; that stretch reads TFKDETETDL…EKLRAMMPWI (146 aa). 4 residues coordinate Mg(2+): Asp-192, Glu-196, Glu-228, and Glu-232. Ser-253 contributes to the substrate binding site.

Belongs to the ketol-acid reductoisomerase family. Requires Mg(2+) as cofactor.

The catalysed reaction is (2R)-2,3-dihydroxy-3-methylbutanoate + NADP(+) = (2S)-2-acetolactate + NADPH + H(+). It catalyses the reaction (2R,3R)-2,3-dihydroxy-3-methylpentanoate + NADP(+) = (S)-2-ethyl-2-hydroxy-3-oxobutanoate + NADPH + H(+). Its pathway is amino-acid biosynthesis; L-isoleucine biosynthesis; L-isoleucine from 2-oxobutanoate: step 2/4. It functions in the pathway amino-acid biosynthesis; L-valine biosynthesis; L-valine from pyruvate: step 2/4. In terms of biological role, involved in the biosynthesis of branched-chain amino acids (BCAA). Catalyzes an alkyl-migration followed by a ketol-acid reduction of (S)-2-acetolactate (S2AL) to yield (R)-2,3-dihydroxy-isovalerate. In the isomerase reaction, S2AL is rearranged via a Mg-dependent methyl migration to produce 3-hydroxy-3-methyl-2-ketobutyrate (HMKB). In the reductase reaction, this 2-ketoacid undergoes a metal-dependent reduction by NADPH to yield (R)-2,3-dihydroxy-isovalerate. The chain is Ketol-acid reductoisomerase (NADP(+)) from Campylobacter hominis (strain ATCC BAA-381 / DSM 21671 / CCUG 45161 / LMG 19568 / NCTC 13146 / CH001A).